The sequence spans 109 residues: Ribonuclease P protein component (109 aa).

It belongs to the RnpA family. As to quaternary structure, consists of a catalytic RNA component (M1 or rnpB) and a protein subunit.

The enzyme catalyses Endonucleolytic cleavage of RNA, removing 5'-extranucleotides from tRNA precursor.. In terms of biological role, RNaseP catalyzes the removal of the 5'-leader sequence from pre-tRNA to produce the mature 5'-terminus. It can also cleave other RNA substrates such as 4.5S RNA. The protein component plays an auxiliary but essential role in vivo by binding to the 5'-leader sequence and broadening the substrate specificity of the ribozyme. The polypeptide is Ribonuclease P protein component (Mycoplasma mycoides subsp. mycoides SC (strain CCUG 32753 / NCTC 10114 / PG1)).